Here is a 237-residue protein sequence, read N- to C-terminus: 1-(5-phosphoribosyl)-5-[(5-phosphoribosylamino)methylideneamino] imidazole-4-carboxamide isomerase (237 aa).

The Proton acceptor role is filled by Asp-8. The Proton donor role is filled by Asp-130.

Belongs to the HisA/HisF family.

Its subcellular location is the cytoplasm. It catalyses the reaction 1-(5-phospho-beta-D-ribosyl)-5-[(5-phospho-beta-D-ribosylamino)methylideneamino]imidazole-4-carboxamide = 5-[(5-phospho-1-deoxy-D-ribulos-1-ylimino)methylamino]-1-(5-phospho-beta-D-ribosyl)imidazole-4-carboxamide. The protein operates within amino-acid biosynthesis; L-histidine biosynthesis; L-histidine from 5-phospho-alpha-D-ribose 1-diphosphate: step 4/9. This Halothermothrix orenii (strain H 168 / OCM 544 / DSM 9562) protein is 1-(5-phosphoribosyl)-5-[(5-phosphoribosylamino)methylideneamino] imidazole-4-carboxamide isomerase.